Consider the following 228-residue polypeptide: Outer membrane protein assembly factor BamE (228 aa).

Residues 1–29 form the signal peptide; that stretch reads MNPILKGVYSPARLGVVALTLFGILGVTG. A lipid anchor (N-palmitoyl cysteine) is attached at C30. C30 carries S-diacylglycerol cysteine lipidation. A disordered region spans residues 197–228; the sequence is DFFGSSKKDPDPQSPQLGPGTLNDVPKPADSK.

Belongs to the BamE family. As to quaternary structure, part of the Bam complex.

The protein resides in the cell outer membrane. In terms of biological role, part of the outer membrane protein assembly complex, which is involved in assembly and insertion of beta-barrel proteins into the outer membrane. In Polynucleobacter necessarius subsp. necessarius (strain STIR1), this protein is Outer membrane protein assembly factor BamE.